Consider the following 372-residue polypeptide: N-methyl-L-tryptophan oxidase (372 aa).

4 to 34 contacts FAD; the sequence is DLIIIGSGSVGAAAGYYATRAGLNVLMTDAH. An S-8alpha-FAD cysteine modification is found at cysteine 308.

It belongs to the MSOX/MTOX family. MTOX subfamily. Monomer. The cofactor is FAD.

The catalysed reaction is N(alpha)-methyl-L-tryptophan + O2 + H2O = L-tryptophan + formaldehyde + H2O2. Its function is as follows. Catalyzes the oxidative demethylation of N-methyl-L-tryptophan. This is N-methyl-L-tryptophan oxidase from Escherichia coli O1:K1 / APEC.